The primary structure comprises 932 residues: MRVQQSKPSAAAKRKAAATSLTTSPQKKRANTTPKRAKDDDFIMTLDSDDDVEDLDAAHVDADHVASDNSEREPEPEAELEPEHSSTPPDGKLTKNQRKRKEKAHLVGKEKIIESLASRSKTNSAAAVKDAMALDKDFEFDIFGDGSAVDYTGAEANGWDMSVTGTRMHKKLNVDDIIEKRRKVLPTLPAPVEEEEENSDEDDQDDDLDDDIKYAEYQDSDDDEDRFGGGNGNIVGQNKDEDQQDAAELDSQEDPLSSDAESASDDDDDNDNDDDDDELQVAEQDEESNSSEDDSDLETEQEKARKAAFFAEDPIATSADSSSKSKSTNDAESSFGAFDLSRPVLRALSSLSFHKPTPIQSRTIPIALAGKDIVAGAVTGSGKTAAFMIPTIERLTWRAKTRTPHEAKSRVLILAPTRELAIQCYSVGKSIAKFTDIRFCLCVGGLSVKSQEAELKLRPEVVIATPGRLIDHVRNSASFTLDDIEILVMDEADRMLEDGFADELNEIVKSCPKGARQTMLFSATMTDDVEQLVRLSLKRPVRLFVDPKRTTAKKLIQEFVRVRGTGTGGVAGADGLSGIQDQPATWISGGRKSEDAQRPALLLSLCTRTFTSQTMIFVRSKKLAHQLKIVFGLLGLSAGELHGDLSQEQRIDALTDFRDGKTDFLLATDLASRGLDIKGVQTVINYDMPGQFEAYLHRVGRTARAGRNGRAVTLVGEADRRMLKLAIKKSSAEQIKHRIIPSAVAAHMCETLERLKPEVDAVLREEKEEKALRIAEMELKKGENMANHADEIFSRPKRTWFQSGSEKTQASALSKAGYQATMDARSSSKQKDKYAGLSRKKRRSKMMRQEIERERKDASGSAGAKTASGGGMDAGIRAAKKAQRPTKLGVAPLKLANKSKGKQSGRNARPSATGGSKTKSSFNRDFSGNKRR.

Low complexity predominate over residues 1 to 24; sequence MRVQQSKPSAAAKRKAAATSLTTS. Disordered regions lie at residues 1-107 and 183-334; these read MRVQ…AHLV and KVLP…AESS. The span at 56 to 75 shows a compositional bias: basic and acidic residues; sequence DAAHVDADHVASDNSEREPE. Composition is skewed to acidic residues over residues 192–210, 242–253, and 262–299; these read VEEEEENSDEDDQDDDLDD, DQQDAAELDSQE, and SASDDDDDNDNDDDDDELQVAEQDEESNSSEDDSDLET. Low complexity predominate over residues 317–334; sequence TSADSSSKSKSTNDAESS. The short motif at 333-361 is the Q motif element; it reads SSFGAFDLSRPVLRALSSLSFHKPTPIQS. The Helicase ATP-binding domain maps to 364–543; the sequence is IPIALAGKDI…RLSLKRPVRL (180 aa). 377–384 contributes to the ATP binding site; that stretch reads AVTGSGKT. Positions 490–493 match the DEAD box motif; it reads DEAD. In terms of domain architecture, Helicase C-terminal spans 601 to 748; the sequence is LLLSLCTRTF…IIPSAVAAHM (148 aa). Positions 812-932 are disordered; sequence ALSKAGYQAT…NRDFSGNKRR (121 aa). Basic and acidic residues predominate over residues 847–858; it reads MRQEIERERKDA. The span at 913 to 926 shows a compositional bias: polar residues; the sequence is TGGSKTKSSFNRDF.

This sequence belongs to the DEAD box helicase family. DDX27/DRS1 subfamily. As to quaternary structure, associates with pre-ribosomal particles.

It is found in the nucleus. The protein resides in the nucleolus. It catalyses the reaction ATP + H2O = ADP + phosphate + H(+). ATP-binding RNA helicase involved in ribosome assembly. In Mycosarcoma maydis (Corn smut fungus), this protein is ATP-dependent RNA helicase DRS1 (DRS1).